The sequence spans 875 residues: Neurotrypsin (875 aa).

The first 20 residues, 1-20, serve as a signal peptide directing secretion; the sequence is MTLARFVLALMLGALPEVVG. The N-linked (GlcNAc...) asparagine glycan is linked to N26. Positions 29-88 are disordered; the sequence is LHHSHRHSPPPGPHYPYYLPTQQRPPRTRPPPPLPRFPRPPRALPAQRPHALQAGHTPRP. Positions 43 to 53 are enriched in low complexity; it reads YPYYLPTQQRP. Residues 56–71 show a composition bias toward pro residues; sequence TRPPPPLPRFPRPPRA. In terms of domain architecture, Kringle spans 93–165; sequence CPAGEPWVSV…GKVDWGYCDC (73 aa). 20 disulfide bridges follow: C93/C165, C109/C149, C138/C163, C195/C259, C208/C269, C239/C249, C305/C369, C318/C379, C349/C359, C412/C475, C425/C485, C455/C465, C525/C589, C538/C599, C569/C579, C619/C750, C661/C677, C765/C831, C794/C808, and C821/C850. SRCR domains lie at 170-271, 280-381, 387-487, and 500-601; these read VRLR…TCSF, IRLA…SCTP, IRLA…ACYP, and VRLV…ICDY. A zymogen activation region region spans residues 619 to 630; the sequence is CGLRLLHRRQKR. Residues 631–874 enclose the Peptidase S1 domain; that stretch reads IIGGKNSLRG…FVPWIKSVTK (244 aa). H676 (charge relay system) is an active-site residue. An N-linked (GlcNAc...) asparagine glycan is attached at N683. The Charge relay system role is filled by D726. S825 acts as the Charge relay system in catalysis.

It belongs to the peptidase S1 family.

Its subcellular location is the secreted. Functionally, plays a role in neuronal plasticity and the proteolytic action may subserve structural reorganizations associated with learning and memory operations. The polypeptide is Neurotrypsin (PRSS12) (Pan troglodytes (Chimpanzee)).